The following is a 542-amino-acid chain: Gamma-terpinene synthase 1 (542 aa).

Mn(2+) contacts are provided by aspartate 295 and aspartate 299. The DDXXD motif signature appears at 295 to 299 (DDVYD). Homodimerization regions lie at residues 301-307 (YDTLDEL) and 373-410 (EAKWYYAGYTPTLAEYLENAKVSISSPTIISQVYFTLP). Mn(2+) contacts are provided by aspartate 439 and glutamate 447.

It belongs to the terpene synthase family. As to quaternary structure, homodimer. Requires Mn(2+) as cofactor. Mg(2+) is required as a cofactor. In terms of tissue distribution, mostly expressed in flowers and, to a lower extent, in leaves, especially in glandular trichomes.

The catalysed reaction is (2E)-geranyl diphosphate = gamma-terpinene + diphosphate. It carries out the reaction (2E)-geranyl diphosphate = alpha-terpinene + diphosphate. It functions in the pathway secondary metabolite biosynthesis; terpenoid biosynthesis. Involved in the biosynthesis of phenolic monoterpenes natural products thymol and carvacrol which have a broad range of biological activities acting as antimicrobial compounds, insecticides, antioxidants and pharmaceutical agents. Monoterpene synthase which catalyzes the conversion of geranyl diphosphate (GPP) to gamma-terpinene and the minor products alpha-thujene, alpha-terpinene, myrcene, sabinene, (+)-R-limonene, alpha-pinene and alpha-phellandrene. The chain is Gamma-terpinene synthase 1 from Thymus vulgaris (Thyme).